The primary structure comprises 214 residues: Uracil phosphoribosyltransferase (214 aa).

Residues Arg-81, Arg-106, and 133-141 contribute to the 5-phospho-alpha-D-ribose 1-diphosphate site; that span reads DPMLATGNS. Uracil contacts are provided by residues Ile-196 and 201–203; that span reads GDA. Asp-202 contributes to the 5-phospho-alpha-D-ribose 1-diphosphate binding site.

This sequence belongs to the UPRTase family. It depends on Mg(2+) as a cofactor.

The enzyme catalyses UMP + diphosphate = 5-phospho-alpha-D-ribose 1-diphosphate + uracil. The protein operates within pyrimidine metabolism; UMP biosynthesis via salvage pathway; UMP from uracil: step 1/1. Its activity is regulated as follows. Allosterically activated by GTP. Catalyzes the conversion of uracil and 5-phospho-alpha-D-ribose 1-diphosphate (PRPP) to UMP and diphosphate. The protein is Uracil phosphoribosyltransferase of Legionella pneumophila (strain Paris).